A 276-amino-acid chain; its full sequence is MAIKKYKPTTNGCRNMSVSAFSEITTQTPEKRLLVSHKDQAGRNNQGKITVRHRGGGVKRKYRLIDFKRNKDNIVGKVATIEYDPNRSANIALIHYLDGEKRYILAPKGLTVGMQIVSGKEADIKVANCLSLMNIPVGTTVHNIELKPGKGGQIARSAGSFCQIISREDKYVLLRLQSGEVPKVLGTCRATIGEIGNESYKLINYGKAGKKRFLGIRPTVRGSAMNPNDHPHGGGEGRAPIGRKSPMTPWGKKARGVKTRDRKKASNALIIRRRTK.

Positions 221–276 (RGSAMNPNDHPHGGGEGRAPIGRKSPMTPWGKKARGVKTRDRKKASNALIIRRRTK) are disordered. Residues 252–276 (KKARGVKTRDRKKASNALIIRRRTK) show a composition bias toward basic residues.

It belongs to the universal ribosomal protein uL2 family. As to quaternary structure, part of the 50S ribosomal subunit. Forms a bridge to the 30S subunit in the 70S ribosome.

One of the primary rRNA binding proteins. Required for association of the 30S and 50S subunits to form the 70S ribosome, for tRNA binding and peptide bond formation. It has been suggested to have peptidyltransferase activity; this is somewhat controversial. Makes several contacts with the 16S rRNA in the 70S ribosome. This chain is Large ribosomal subunit protein uL2, found in Aster yellows phytoplasma.